Reading from the N-terminus, the 342-residue chain is scyllo-inositol 2-dehydrogenase (NAD(+)) (342 aa).

It belongs to the Gfo/Idh/MocA family.

The catalysed reaction is scyllo-inositol + NAD(+) = scyllo-inosose + NADH + H(+). It functions in the pathway polyol metabolism. Its function is as follows. Catalyzes the reversible NAD(+)-dependent oxidation of scyllo-inositol (SI) to 2,4,6/3,5-pentahydroxycyclohexanone (scyllo-inosose or SIS). Is required for SI catabolism that allows B.subtilis to utilize SI as the sole carbon source for growth. Cannot use NADP(+) instead of NAD(+). This is scyllo-inositol 2-dehydrogenase (NAD(+)) from Bacillus subtilis (strain 168).